Reading from the N-terminus, the 573-residue chain is Heat shock protein 60A (573 aa).

The transit peptide at methionine 1 to asparagine 57 directs the protein to the mitochondrion.

The protein belongs to the chaperonin (HSP60) family.

It is found in the mitochondrion matrix. Functionally, prevents misfolding and promotes the refolding and proper assembly of unfolded polypeptides generated under stress conditions. The chain is Heat shock protein 60A from Drosophila melanogaster (Fruit fly).